The primary structure comprises 192 residues: MNHLTNQYVMLHDEKRCIGCQACTVACKVLNDVPEGFSRVQVQIRAPEQASNALTHFQFVRVSCQHCENAPCVSVCPTGASYRDENGIVQVDKSRCIGCDYCVAACPFHVRYLNPQTGVADKCNFCADTRLAAGQSPACVSVCPTDALKFGRLDESEIQRWVGQKEVYRQQEARSGAVSLYRRKEVHQEGKA.

4Fe-4S ferredoxin-type domains follow at residues 8 to 36 (YVML…VPEG), 55 to 86 (THFQ…RDEN), and 87 to 116 (GIVQ…LNPQ). Cysteine 17, cysteine 20, cysteine 23, cysteine 27, cysteine 64, cysteine 67, cysteine 72, cysteine 76, cysteine 96, cysteine 99, cysteine 102, cysteine 106, cysteine 123, cysteine 126, cysteine 139, and cysteine 143 together coordinate [4Fe-4S] cluster.

Composed of three subunits: PhsA, PhsB and PhsC. The cofactor is [4Fe-4S] cluster.

It localises to the cell inner membrane. Functionally, component of the PhsABC thiosulfate reductase that catalyzes the reduction of thiosulfate to sulfite and hydrogen sulfide, with menaquinol as the sole electron donor. Proton motive force (PMF) is required to drive transmembrane electron transfer within the reductase. The PhsB subunit transfers electrons between PhsC and PhsA. The sequence is that of Thiosulfate reductase electron transfer subunit PhsB (phsB) from Salmonella typhi.